A 270-amino-acid chain; its full sequence is Tryptophan synthase alpha chain (270 aa).

Residues Glu-57 and Asp-68 each act as proton acceptor in the active site.

It belongs to the TrpA family. In terms of assembly, tetramer of two alpha and two beta chains.

The catalysed reaction is (1S,2R)-1-C-(indol-3-yl)glycerol 3-phosphate + L-serine = D-glyceraldehyde 3-phosphate + L-tryptophan + H2O. It participates in amino-acid biosynthesis; L-tryptophan biosynthesis; L-tryptophan from chorismate: step 5/5. Functionally, the alpha subunit is responsible for the aldol cleavage of indoleglycerol phosphate to indole and glyceraldehyde 3-phosphate. The protein is Tryptophan synthase alpha chain of Mycobacterium bovis (strain ATCC BAA-935 / AF2122/97).